The chain runs to 476 residues: MNFKSTIGLEVHFELKTKSKIFSPSPVTYGAEQNTETNVIDWAMPGTLPMVNKNVYRLGIMVAIATHAHILPTTHFDRKNYFYPDNPKAYQITQFFQPLARDGYIEVEVRGKKKRIGIHEMHIEEDAGKNTHGTNGFSYVDLNRQGVPLLEVVSEPDMEDPEEAYAYLEKLRKIVQFTGASDVKMEEGSMRVDTNISIRPVGQKELGTKVEMKNLNSFDHVRRSLAYEEKRQEQVLLAGGHIQLSTRRFDEATGKTVLERVKEGASDYRYFPEPDIAPDHISQEWIDQIAKELPKSPFDRYDDYVNKFGLKPYDANVLLQTKESSDFFDAAVAAGADPTLAANWMNTQVNGYLNDHRVSLNDIKLTPEHLAEMIKLIKDGTISSKIAKKVFAETIANGTDPKKYVEDNGMVQLSDTSVLAPMVKKVVDDNPQSVEDFKNGKDRAIGFLVGQIMKQTRGKANPKMVNKLLNQELQNR.

The protein belongs to the GatB/GatE family. GatB subfamily. Heterotrimer of A, B and C subunits.

The catalysed reaction is L-glutamyl-tRNA(Gln) + L-glutamine + ATP + H2O = L-glutaminyl-tRNA(Gln) + L-glutamate + ADP + phosphate + H(+). It carries out the reaction L-aspartyl-tRNA(Asn) + L-glutamine + ATP + H2O = L-asparaginyl-tRNA(Asn) + L-glutamate + ADP + phosphate + 2 H(+). Functionally, allows the formation of correctly charged Asn-tRNA(Asn) or Gln-tRNA(Gln) through the transamidation of misacylated Asp-tRNA(Asn) or Glu-tRNA(Gln) in organisms which lack either or both of asparaginyl-tRNA or glutaminyl-tRNA synthetases. The reaction takes place in the presence of glutamine and ATP through an activated phospho-Asp-tRNA(Asn) or phospho-Glu-tRNA(Gln). The polypeptide is Aspartyl/glutamyl-tRNA(Asn/Gln) amidotransferase subunit B (Lactobacillus helveticus (strain DPC 4571)).